The sequence spans 144 residues: Large ribosomal subunit protein uL15 (144 aa).

Residues 1-48 (MIKLESLQDPSPRKRRTKLLGRGPSSGHGKTSCRGHKGDGSRSGYKRR) form a disordered region.

The protein belongs to the universal ribosomal protein uL15 family. As to quaternary structure, part of the 50S ribosomal subunit.

Binds to the 23S rRNA. The polypeptide is Large ribosomal subunit protein uL15 (Chlamydia caviae (strain ATCC VR-813 / DSM 19441 / 03DC25 / GPIC) (Chlamydophila caviae)).